Consider the following 441-residue polypeptide: UDP-N-acetylglucosamine--N-acetylmuramyl-(pentapeptide) pyrophosphoryl-undecaprenol N-acetylglucosamine transferase (441 aa).

UDP-N-acetyl-alpha-D-glucosamine is bound by residues 28–30 (TGG), Asn-140, Arg-176, Ser-204, Ile-257, and Gln-302.

It belongs to the glycosyltransferase 28 family. MurG subfamily.

It is found in the cell inner membrane. It carries out the reaction di-trans,octa-cis-undecaprenyl diphospho-N-acetyl-alpha-D-muramoyl-L-alanyl-D-glutamyl-meso-2,6-diaminopimeloyl-D-alanyl-D-alanine + UDP-N-acetyl-alpha-D-glucosamine = di-trans,octa-cis-undecaprenyl diphospho-[N-acetyl-alpha-D-glucosaminyl-(1-&gt;4)]-N-acetyl-alpha-D-muramoyl-L-alanyl-D-glutamyl-meso-2,6-diaminopimeloyl-D-alanyl-D-alanine + UDP + H(+). Its pathway is cell wall biogenesis; peptidoglycan biosynthesis. Its function is as follows. Cell wall formation. Catalyzes the transfer of a GlcNAc subunit on undecaprenyl-pyrophosphoryl-MurNAc-pentapeptide (lipid intermediate I) to form undecaprenyl-pyrophosphoryl-MurNAc-(pentapeptide)GlcNAc (lipid intermediate II). In Xanthomonas oryzae pv. oryzae (strain KACC10331 / KXO85), this protein is UDP-N-acetylglucosamine--N-acetylmuramyl-(pentapeptide) pyrophosphoryl-undecaprenol N-acetylglucosamine transferase.